Here is a 213-residue protein sequence, read N- to C-terminus: Small ribosomal subunit protein uS7 (213 aa).

It belongs to the universal ribosomal protein uS7 family. As to quaternary structure, component of the small ribosomal subunit (SSU). Mature N.crassa ribosomes consist of a small (40S) and a large (60S) subunit. The 40S small subunit contains 1 molecule of ribosomal RNA (18S rRNA) and at least 32 different proteins. The large 60S subunit contains 3 rRNA molecules (26S, 5.8S and 5S rRNA) and at least 42 different proteins.

It is found in the cytoplasm. Its function is as follows. Component of the ribosome, a large ribonucleoprotein complex responsible for the synthesis of proteins in the cell. The small ribosomal subunit (SSU) binds messenger RNAs (mRNAs) and translates the encoded message by selecting cognate aminoacyl-transfer RNA (tRNA) molecules. The large subunit (LSU) contains the ribosomal catalytic site termed the peptidyl transferase center (PTC), which catalyzes the formation of peptide bonds, thereby polymerizing the amino acids delivered by tRNAs into a polypeptide chain. The nascent polypeptides leave the ribosome through a tunnel in the LSU and interact with protein factors that function in enzymatic processing, targeting, and the membrane insertion of nascent chains at the exit of the ribosomal tunnel. In Neurospora crassa (strain ATCC 24698 / 74-OR23-1A / CBS 708.71 / DSM 1257 / FGSC 987), this protein is Small ribosomal subunit protein uS7 (rps-5).